Here is a 1021-residue protein sequence, read N- to C-terminus: Solute carrier family 12 member 3 (1021 aa).

Over 1 to 137 (MAELPTTETP…KNPEEPVRFG (137 aa)) the chain is Cytoplasmic. S43 is modified (phosphoserine). At T46 the chain carries Phosphothreonine; by OXSR1 and STK39. S49 carries the phosphoserine modification. Residue T50 is modified to Phosphothreonine. A phosphothreonine; by OXSR1 and STK39 mark is found at T55 and T60. S73 is modified (phosphoserine). Phosphoserine; by OXSR1 and STK39 is present on S91. Phosphothreonine is present on T124. Phosphoserine is present on S126. A discontinuously helical transmembrane segment spans residues 138–167 (WVKGVMIRCMLNIWGVILYLRLPWITAQAG). Na(+) is bound at residue L148. N149 serves as a coordination point for polythiazide. W151 contacts Na(+). The helical transmembrane segment at 168–189 (IVLTWIIILLSVTVTSITGLSI) threads the bilayer. Residues 190–220 (SAISTNGKVKSGGTYFLISRSLGPELGGSIG) are Cytoplasmic-facing. Residues 221-243 (LIFAFANAVGVAMHTVGFAETVR) form a helical membrane-spanning segment. Residues N227 and H234 each contribute to the polythiazide site. The Extracellular segment spans residues 244–255 (DLLQEYGAPIVD). 2 helical membrane-spanning segments follow: residues 256–280 (PIND…AGME) and 281–303 (WESK…YLVG). The Extracellular portion of the chain corresponds to 304-338 (TLIPPSEDKASKGFFSYRADIFVQNLVPDWRGPDG). Residues 339–360 (TFFGMFSIFFPSATGILAGANI) form a discontinuously helical membrane-spanning segment. Residue T352 coordinates polythiazide. Residues G353, I354, and L355 each contribute to the chloride site. N359 contributes to the polythiazide binding site. Over 361–371 (SGDLKDPAIAI) the chain is Cytoplasmic. A helical transmembrane segment spans residues 372-393 (PKGTLMAIFWTTISYLAISATI). Residues 394–453 (GSCVVRDASGVLNDTVTPGWGACEGLACSYGWNFTECTQQHSCHYGLINYYQTMSMVSGF) lie on the Extracellular side of the membrane. N-linked (GlcNAc...) asparagine glycosylation occurs at N406. Cysteines 416 and 421 form a disulfide. A glycan (N-linked (GlcNAc...) asparagine) is linked at N426. An intrachain disulfide couples C430 to C436. A helical membrane pass occupies residues 454–477 (APLITAGIFGATLSSALACLVSAA). A464, S467, and S468 together coordinate Na(+). At 478–507 (KVFQCLCEDQLYPLIGFFGKGYGKNKEPVR) the chain is on the cytoplasmic side. A helical membrane pass occupies residues 508–522 (GYLLAYAIAVAFIII). The Extracellular segment spans residues 523 to 527 (AELNT). Residues 528–544 (IAPIISNFFLCSYALIN) form a helical membrane-spanning segment. Residue Y540 participates in chloride binding. The Cytoplasmic portion of the chain corresponds to 545–567 (FSCFHASITNSPGWRPSFQYYNK). The next 2 membrane-spanning stretches (helical) occupy residues 568–587 (WAAL…LTWW) and 588–599 (AALIAIGVVLFL). Residues 600–1021 (LLYVIYKKPE…QENVLTFYCQ (422 aa)) lie on the Cytoplasmic side of the membrane. Residues 615 to 630 (SVQAGSYNLALSYSVG) are scissor helix. Residues L648, R655, V677, G741, L780, and N781 each contribute to the ATP site.

The protein belongs to the SLC12A transporter family. In terms of assembly, homodimer; adopts a domain-swap conformation at the scissor helices connecting the transmembrane domain and C-terminal domain. Interacts with KLHL3. Interacts with IL18R1; this interaction is increased by IL18 treatment. Ubiquitinated; ubiquitination is essential for regulation of endocytosis. The BCR(KLHL3) complex was initially identified as a candidate ubiquitin ligase for SLC12A3. However, it was later shown that it is not the case. Post-translationally, phosphorylated at Thr-46, Thr-55, Thr-60 and Ser-91 by OXSR1/OSR1 and STK39/SPAK downstream of WNK4, promoting its activity. Phosphorylated in response to IL18. Predominantly expressed in the kidney (at protein level). Localizes to the distal convoluted tubules (at protein level). Not detected in normal aorta, but abundantly expressed in fatty streaks and advanced atherosclerotic lesions (at protein level).

The protein localises to the cell membrane. It localises to the apical cell membrane. It carries out the reaction chloride(out) + Na(+)(out) = chloride(in) + Na(+)(in). Phosphorylation by OXSR1/OSR1 and STK39/SPAK in kidney distal convoluted tubules downstream of WNK4 promotes its activity. Also activated by OXSR1/OSR1 and STK39/SPAK downstream of WNK3. Target of thiazide diuretics used in the treatment of high blood pressure. Thiazide drugs, such as polythiazide, specifically inhibit SLC12A3/NCC transporter activity by competing with chloride for binding and by locking SLC12A3/NCC in an outward-facing conformation. Functionally, electroneutral sodium and chloride ion cotransporter, which acts as a key mediator of sodium and chloride reabsorption in kidney distal convoluted tubules. Also acts as a receptor for the pro-inflammatory cytokine IL18, thereby contributing to IL18-induced cytokine production, including IFNG, IL6, IL18 and CCL2. May act either independently of IL18R1, or in a complex with IL18R1. The sequence is that of Solute carrier family 12 member 3 from Homo sapiens (Human).